We begin with the raw amino-acid sequence, 532 residues long: 2,3-bisphosphoglycerate-independent phosphoglycerate mutase (532 aa).

Residues D15 and S65 each contribute to the Mn(2+) site. The active-site Phosphoserine intermediate is S65. Substrate contacts are provided by residues H126, 156-157, R188, R194, 258-261, and K331; these read RD and RPDR. Residues D398, H402, D439, H440, and H457 each coordinate Mn(2+).

It belongs to the BPG-independent phosphoglycerate mutase family. As to quaternary structure, monomer. It depends on Mn(2+) as a cofactor.

The catalysed reaction is (2R)-2-phosphoglycerate = (2R)-3-phosphoglycerate. It functions in the pathway carbohydrate degradation; glycolysis; pyruvate from D-glyceraldehyde 3-phosphate: step 3/5. Functionally, catalyzes the interconversion of 2-phosphoglycerate and 3-phosphoglycerate. The chain is 2,3-bisphosphoglycerate-independent phosphoglycerate mutase from Rippkaea orientalis (strain PCC 8801 / RF-1) (Cyanothece sp. (strain PCC 8801)).